The chain runs to 395 residues: G-protein coupled receptor 182 (395 aa).

Over 1-53 (MSVIPSPRPVSTLEPDNDFRDIHNWTELLHLFNQTFTDCHIEFNENTKHVVLF) the chain is Extracellular. Asn24 and Asn33 each carry an N-linked (GlcNAc...) asparagine glycan. A helical membrane pass occupies residues 54 to 75 (VFYLAIFVVGLVENVLVICVNC). The Cytoplasmic segment spans residues 76-86 (RRSGRVGMLNL). A helical transmembrane segment spans residues 87–109 (YILNMAIADLGIILSLPVWMLEV). Residues 110–123 (MLEYTWLWGSFSCR) are Extracellular-facing. A disulfide bridge links Cys122 with Cys198. The helical transmembrane segment at 124–145 (FIHYFYLVNMYSSIFFLTCLSI) threads the bilayer. Topologically, residues 146 to 166 (DRYVTLTNTSPSWQRHQHRIR) are cytoplasmic. A helical membrane pass occupies residues 167-189 (RAVCAGVWVLSAIIPLPEVVHIQ). The Extracellular segment spans residues 190 to 213 (LLDGSEPMCLFLAPFETYSAWALA). Residues 214–235 (VALSATILGFLLPFLLIAVFNI) traverse the membrane as a helical segment. The Cytoplasmic portion of the chain corresponds to 236-254 (LTACRLRRQRQTESRRHCL). The helical transmembrane segment at 255–276 (LMWAYIVVFAICWLPYQVTMLL) threads the bilayer. Residues 277 to 295 (LTLHGTHIFLHCHLVNLLY) are Extracellular-facing. A helical transmembrane segment spans residues 296-316 (FFYEIIDCFSMLHCVANPILY). The Cytoplasmic portion of the chain corresponds to 317–395 (NFLSPSFRGR…QTPHLHSAIL (79 aa)). Ser329 bears the Phosphoserine mark.

This sequence belongs to the G-protein coupled receptor 1 family. As to expression, expressed in liver and lung.

It is found in the cell membrane. In terms of biological role, orphan receptor. The protein is G-protein coupled receptor 182 (Gpr182) of Mus musculus (Mouse).